A 301-amino-acid chain; its full sequence is XIAP-associated factor 1 (301 aa).

A TRAF-type zinc finger spans residues 22–99 (LHEAYCLRFL…KLDMQLSKLE (78 aa)). A disordered region spans residues 189–257 (ILPSSLPSQA…KPRTSSPRGD (69 aa)). A compositionally biased stretch (polar residues) spans 193–205 (SLPSQAAENQTST).

Interacts with BIRC4; the interaction is not detected in. Interacts with BIRC1, BIRC2, BIRC3, BIRC7 and BIRC8. Part of an complex consisting of BIRC4, XAF1 and BIRC5; the complex formation requires IFN-beta stimulation. Interacts with RNF114, the interaction increases XAF1 stability and proapoptotic effects, and may regulate IFN signaling. As to expression, widely expressed. Expression is frequently down-regulated in cancer cell lines. Isoform 5 is widely expressed. Expressed in placenta (at protein level).

The protein resides in the cytoplasm. It localises to the nucleus. It is found in the mitochondrion. Functionally, seems to function as a negative regulator of members of the IAP (inhibitor of apoptosis protein) family. Inhibits anti-caspase activity of BIRC4. Induces cleavage and inactivation of BIRC4 independent of caspase activation. Mediates TNF-alpha-induced apoptosis and is involved in apoptosis in trophoblast cells. May inhibit BIRC4 indirectly by activating the mitochondrial apoptosis pathway. After translocation to mitochondria, promotes translocation of BAX to mitochondria and cytochrome c release from mitochondria. Seems to promote the redistribution of BIRC4 from the cytoplasm to the nucleus, probably independent of BIRC4 inactivation which seems to occur in the cytoplasm. The BIRC4-XAF1 complex mediates down-regulation of BIRC5/survivin; the process requires the E3 ligase activity of BIRC4. Seems to be involved in cellular sensitivity to the proapoptotic actions of TRAIL. May be a tumor suppressor by mediating apoptosis resistance of cancer cells. The sequence is that of XIAP-associated factor 1 (XAF1) from Homo sapiens (Human).